A 366-amino-acid polypeptide reads, in one-letter code: tRNA/tmRNA (uracil-C(5))-methyltransferase (366 aa).

Residues glutamine 190, tyrosine 218, asparagine 223, glutamate 239, and aspartate 299 each coordinate S-adenosyl-L-methionine. The Nucleophile role is filled by cysteine 324. Catalysis depends on glutamate 358, which acts as the Proton acceptor.

Belongs to the class I-like SAM-binding methyltransferase superfamily. RNA M5U methyltransferase family. TrmA subfamily.

The enzyme catalyses uridine(54) in tRNA + S-adenosyl-L-methionine = 5-methyluridine(54) in tRNA + S-adenosyl-L-homocysteine + H(+). It catalyses the reaction uridine(341) in tmRNA + S-adenosyl-L-methionine = 5-methyluridine(341) in tmRNA + S-adenosyl-L-homocysteine + H(+). Dual-specificity methyltransferase that catalyzes the formation of 5-methyluridine at position 54 (m5U54) in all tRNAs, and that of position 341 (m5U341) in tmRNA (transfer-mRNA). This is tRNA/tmRNA (uracil-C(5))-methyltransferase from Salmonella choleraesuis (strain SC-B67).